Reading from the N-terminus, the 57-residue chain is UPF0391 membrane protein NE0130 (57 aa).

2 helical membrane passes run 1–21 (MLKW…FGFR) and 33–53 (FLFF…LLGI).

This sequence belongs to the UPF0391 family.

It is found in the cell membrane. This is UPF0391 membrane protein NE0130 from Nitrosomonas europaea (strain ATCC 19718 / CIP 103999 / KCTC 2705 / NBRC 14298).